The chain runs to 217 residues: ATP-dependent Clp protease proteolytic subunit (217 aa).

Ser120 functions as the Nucleophile in the catalytic mechanism. His145 is a catalytic residue.

Belongs to the peptidase S14 family. As to quaternary structure, fourteen ClpP subunits assemble into 2 heptameric rings which stack back to back to give a disk-like structure with a central cavity, resembling the structure of eukaryotic proteasomes.

The protein resides in the cytoplasm. It catalyses the reaction Hydrolysis of proteins to small peptides in the presence of ATP and magnesium. alpha-casein is the usual test substrate. In the absence of ATP, only oligopeptides shorter than five residues are hydrolyzed (such as succinyl-Leu-Tyr-|-NHMec, and Leu-Tyr-Leu-|-Tyr-Trp, in which cleavage of the -Tyr-|-Leu- and -Tyr-|-Trp bonds also occurs).. Its function is as follows. Cleaves peptides in various proteins in a process that requires ATP hydrolysis. Has a chymotrypsin-like activity. Plays a major role in the degradation of misfolded proteins. The chain is ATP-dependent Clp protease proteolytic subunit from Ralstonia nicotianae (strain ATCC BAA-1114 / GMI1000) (Ralstonia solanacearum).